Reading from the N-terminus, the 802-residue chain is DNA mismatch repair protein MutS (802 aa).

Position 617–624 (617–624) interacts with ATP; that stretch reads GPNMGGKS.

The protein belongs to the DNA mismatch repair MutS family.

In terms of biological role, this protein is involved in the repair of mismatches in DNA. It is possible that it carries out the mismatch recognition step. This protein has a weak ATPase activity. The polypeptide is DNA mismatch repair protein MutS (Buchnera aphidicola subsp. Acyrthosiphon pisum (strain Tuc7)).